The chain runs to 138 residues: Putative pre-16S rRNA nuclease (138 aa).

The protein belongs to the YqgF nuclease family.

The protein resides in the cytoplasm. In terms of biological role, could be a nuclease involved in processing of the 5'-end of pre-16S rRNA. The sequence is that of Putative pre-16S rRNA nuclease from Bacteroides fragilis (strain ATCC 25285 / DSM 2151 / CCUG 4856 / JCM 11019 / LMG 10263 / NCTC 9343 / Onslow / VPI 2553 / EN-2).